Consider the following 199-residue polypeptide: Glycerol-3-phosphate acyltransferase (199 aa).

5 helical membrane passes run Ile3 to Val23, Val55 to Ile75, Phe79 to Leu99, Val113 to Phe133, and Tyr155 to Ile175.

It belongs to the PlsY family. In terms of assembly, probably interacts with PlsX.

It localises to the cell inner membrane. It catalyses the reaction an acyl phosphate + sn-glycerol 3-phosphate = a 1-acyl-sn-glycero-3-phosphate + phosphate. It functions in the pathway lipid metabolism; phospholipid metabolism. Functionally, catalyzes the transfer of an acyl group from acyl-phosphate (acyl-PO(4)) to glycerol-3-phosphate (G3P) to form lysophosphatidic acid (LPA). This enzyme utilizes acyl-phosphate as fatty acyl donor, but not acyl-CoA or acyl-ACP. This chain is Glycerol-3-phosphate acyltransferase, found in Endomicrobium trichonymphae.